Consider the following 91-residue polypeptide: Beta-microseminoprotein (91 aa).

Disulfide bonds link Cys-2/Cys-54, Cys-22/Cys-46, Cys-41/Cys-75, Cys-44/Cys-53, and Cys-68/Cys-88.

As to expression, expressed in ciliated epithelium of nidamental gland and in secretory-like cells in accessory nidamental gland (at protein level). Expressed in ovary, nidamental gland and accessory nidamental gland.

Its subcellular location is the secreted. In terms of biological role, acts as a pheromone. Triggers aggressive behaviors in males such as fin beating, lunging and grabbing. These behaviors form part of the competition for fertile females. This is Beta-microseminoprotein from Doryteuthis pealeii (Longfin inshore squid).